The chain runs to 158 residues: S-ribosylhomocysteine lyase (158 aa).

Residues H54, H58, and C125 each contribute to the Fe cation site.

The protein belongs to the LuxS family. As to quaternary structure, homodimer. Fe cation is required as a cofactor.

The enzyme catalyses S-(5-deoxy-D-ribos-5-yl)-L-homocysteine = (S)-4,5-dihydroxypentane-2,3-dione + L-homocysteine. Involved in the synthesis of autoinducer 2 (AI-2) which is secreted by bacteria and is used to communicate both the cell density and the metabolic potential of the environment. The regulation of gene expression in response to changes in cell density is called quorum sensing. Catalyzes the transformation of S-ribosylhomocysteine (RHC) to homocysteine (HC) and 4,5-dihydroxy-2,3-pentadione (DPD). The polypeptide is S-ribosylhomocysteine lyase (Lactococcus lactis subsp. cremoris (strain MG1363)).